A 279-amino-acid chain; its full sequence is MVRNSRLDICSIVNAKSGICDQDCKFCAQSSLYNTGVKRYPLLDEESILEKAKEAEKMGAVRFGIVTSGKRPTRDELLKIASIIEFLKVTTSLRICASLGTLEKDELSYLKDHGLDRYHHNLETSPGFFQNICTTHTFYDRVKTVENAKSIGLEVCSGGIFGVGESFEDRLELARILKDLEVDSVPINFLIPIKGTPFENFPELDVVERIKTIAAFRIVLGENVTIKIAAGREKLGDFQALAFFAGANGMIVGGYLTVKGRSYDDDRKLVEGLKELMGW.

The Radical SAM core domain maps to 2–232; that stretch reads VRNSRLDICS…NVTIKIAAGR (231 aa). C20, C24, and C27 together coordinate [4Fe-4S] cluster. Residues C96, C156, and K227 each coordinate [2Fe-2S] cluster.

It belongs to the radical SAM superfamily. Biotin synthase family. As to quaternary structure, homodimer. Requires [4Fe-4S] cluster as cofactor. The cofactor is [2Fe-2S] cluster.

The enzyme catalyses (4R,5S)-dethiobiotin + (sulfur carrier)-SH + 2 reduced [2Fe-2S]-[ferredoxin] + 2 S-adenosyl-L-methionine = (sulfur carrier)-H + biotin + 2 5'-deoxyadenosine + 2 L-methionine + 2 oxidized [2Fe-2S]-[ferredoxin]. Its pathway is cofactor biosynthesis; biotin biosynthesis; biotin from 7,8-diaminononanoate: step 2/2. In terms of biological role, catalyzes the conversion of dethiobiotin (DTB) to biotin by the insertion of a sulfur atom into dethiobiotin via a radical-based mechanism. This Thermotoga neapolitana (strain ATCC 49049 / DSM 4359 / NBRC 107923 / NS-E) protein is Biotin synthase.